Reading from the N-terminus, the 1051-residue chain is Protein ALWAYS EARLY 2 (1051 aa).

Composition is skewed to basic residues over residues 1–11 (MAPVRKSRSVN) and 27–36 (SKKNKLRKKL). The tract at residues 1–37 (MAPVRKSRSVNKRFTNETSPRKDAGKSKKNKLRKKLS) is disordered. Residues 39-93 (KLGPQWTRLELERFYDAYRKHGQEWRRVAAAIRNSRSVDMVEALFNMNRAYLSLP) enclose the SANT domain. Disordered regions lie at residues 114-158 (EGSG…IGSP), 170-210 (ANGT…RKQF), 225-293 (TDAS…KDTT), 323-375 (AECN…TSGA), 397-605 (SELS…SSRS), and 948-981 (SIEH…NAQM). The segment covering 120-130 (GEGHDASEVPR) has biased composition (basic and acidic residues). The span at 131-140 (KQQKRKRAKP) shows a compositional bias: basic residues. Residues 279–293 (ESSRERKLDSDKDTT) are compositionally biased toward basic and acidic residues. The segment covering 323 to 332 (AECNDSDDNG) has biased composition (acidic residues). Basic and acidic residues-rich tracts occupy residues 350–372 (AAIE…DKHT) and 403–417 (LKEE…EKSS). A compositionally biased stretch (polar residues) spans 560 to 574 (KQVSDSGPTSLSQKP). The span at 586-597 (LQEKAKSSETTH) shows a compositional bias: basic and acidic residues. A compositionally biased stretch (polar residues) spans 967–981 (NDLNSQDGSEKNAQM).

As to quaternary structure, interacts with SNL1 (via PAH3). In terms of tissue distribution, expressed ubiquitously in vegetative and reproductive tissues.

It is found in the nucleus. This is Protein ALWAYS EARLY 2 (ALY2) from Arabidopsis thaliana (Mouse-ear cress).